The primary structure comprises 496 residues: DNA-directed DNA/RNA polymerase mu (496 aa).

The tract at residues 1 to 22 (MLPKRRRVRAGSPHSAVASSTP) is disordered. At S12 the chain carries Phosphoserine. A compositionally biased stretch (low complexity) spans 12 to 22 (SPHSAVASSTP). The BRCT domain maps to 23 to 122 (PSVVRFPDVA…QPVPEEGRHH (100 aa)). Residues T241 and V243 each coordinate Na(+). The interval 323–332 (RGKLQGHDVD) is involved in ssDNA binding. 3 residues coordinate Mg(2+): D330, D332, and D420.

It belongs to the DNA polymerase type-X family. Requires Mg(2+) as cofactor.

Its subcellular location is the nucleus. The enzyme catalyses DNA(n) + a 2'-deoxyribonucleoside 5'-triphosphate = DNA(n+1) + diphosphate. Gap-filling polymerase involved in repair of DNA double-strand breaks by non-homologous end joining (NHEJ). Participates in immunoglobulin (Ig) light chain gene rearrangement in V(D)J recombination. The polypeptide is DNA-directed DNA/RNA polymerase mu (Polm) (Mus musculus (Mouse)).